Here is a 354-residue protein sequence, read N- to C-terminus: UDP-N-acetylglucosamine--N-acetylmuramyl-(pentapeptide) pyrophosphoryl-undecaprenol N-acetylglucosamine transferase (354 aa).

UDP-N-acetyl-alpha-D-glucosamine-binding positions include Thr-15–Gly-17, Asn-127, Arg-163, Ser-191, Ile-244, Ala-263–Glu-268, and Gln-288.

The protein belongs to the glycosyltransferase 28 family. MurG subfamily.

It localises to the cell inner membrane. It carries out the reaction di-trans,octa-cis-undecaprenyl diphospho-N-acetyl-alpha-D-muramoyl-L-alanyl-D-glutamyl-meso-2,6-diaminopimeloyl-D-alanyl-D-alanine + UDP-N-acetyl-alpha-D-glucosamine = di-trans,octa-cis-undecaprenyl diphospho-[N-acetyl-alpha-D-glucosaminyl-(1-&gt;4)]-N-acetyl-alpha-D-muramoyl-L-alanyl-D-glutamyl-meso-2,6-diaminopimeloyl-D-alanyl-D-alanine + UDP + H(+). It participates in cell wall biogenesis; peptidoglycan biosynthesis. Functionally, cell wall formation. Catalyzes the transfer of a GlcNAc subunit on undecaprenyl-pyrophosphoryl-MurNAc-pentapeptide (lipid intermediate I) to form undecaprenyl-pyrophosphoryl-MurNAc-(pentapeptide)GlcNAc (lipid intermediate II). This Aliivibrio fischeri (strain MJ11) (Vibrio fischeri) protein is UDP-N-acetylglucosamine--N-acetylmuramyl-(pentapeptide) pyrophosphoryl-undecaprenol N-acetylglucosamine transferase.